A 275-amino-acid chain; its full sequence is Ammonia transport outward protein 3 (275 aa).

Residues 1–84 (MTSSASSPQD…NCAKYTPHQF (84 aa)) lie on the Extracellular side of the membrane. Phosphoserine is present on Ser-4. A helical transmembrane segment spans residues 85 to 105 (ANPVPLGLASFSLSCLVLSLI). Over 106–120 (NANVRGVTDGKWALS) the chain is Cytoplasmic. A helical transmembrane segment spans residues 121 to 141 (LFMFFGGAIELFAGLLCFVIG). Residues 142-181 (DTYAMTVFSSFGGFWICYGYGLTDTDNLVSGYTDPTMLNN) are Extracellular-facing. A helical membrane pass occupies residues 182 to 202 (VIGFFLAGWTVFTFLMLMCTL). Over 203 to 207 (KSTWG) the chain is Cytoplasmic. Residues 208–228 (LFLLLTFLDLTFLLLCIGTFI) traverse the membrane as a helical segment. Over 229-236 (DNNNLKMA) the chain is Extracellular. The helical transmembrane segment at 237 to 257 (GGYFGILSSCCGWYSLYCSVV) threads the bilayer. Over 258 to 275 (SPSNSYLAFRAHTMPNAP) the chain is Cytoplasmic.

The protein belongs to the acetate uptake transporter (AceTr) (TC 2.A.96) family.

The protein resides in the cell membrane. In terms of biological role, transporter protein required for ammonia export. Induced in rho(0) cells, probably to eliminate the excess ammonia that arises because of a potential defect in ammonia assimilation in those cells. This is Ammonia transport outward protein 3 (ATO3) from Saccharomyces cerevisiae (strain ATCC 204508 / S288c) (Baker's yeast).